Consider the following 558-residue polypeptide: Formate--tetrahydrofolate ligase (558 aa).

67-74 (TPAGEGKT) provides a ligand contact to ATP.

It belongs to the formate--tetrahydrofolate ligase family.

It carries out the reaction (6S)-5,6,7,8-tetrahydrofolate + formate + ATP = (6R)-10-formyltetrahydrofolate + ADP + phosphate. It participates in one-carbon metabolism; tetrahydrofolate interconversion. This chain is Formate--tetrahydrofolate ligase, found in Ruegeria pomeroyi (strain ATCC 700808 / DSM 15171 / DSS-3) (Silicibacter pomeroyi).